A 391-amino-acid polypeptide reads, in one-letter code: Alanine racemase (391 aa).

K46 functions as the Proton acceptor; specific for D-alanine in the catalytic mechanism. K46 carries the N6-(pyridoxal phosphate)lysine modification. R148 is a binding site for substrate. Catalysis depends on Y283, which acts as the Proton acceptor; specific for L-alanine. M331 provides a ligand contact to substrate.

This sequence belongs to the alanine racemase family. It depends on pyridoxal 5'-phosphate as a cofactor.

The catalysed reaction is L-alanine = D-alanine. It functions in the pathway amino-acid biosynthesis; D-alanine biosynthesis; D-alanine from L-alanine: step 1/1. Functionally, catalyzes the interconversion of L-alanine and D-alanine. May also act on other amino acids. This chain is Alanine racemase (alr), found in Streptomyces coelicolor (strain ATCC BAA-471 / A3(2) / M145).